We begin with the raw amino-acid sequence, 116 residues long: Cuticle protein AM1274 (116 aa).

Gln1 carries the pyrrolidone carboxylic acid modification. Residues 1–22 (QLANEPPIEIIRQESTDNGDGN) are disordered. The region spanning 20–85 (DGNFNFLFET…PVSDFIPTPH (66 aa)) is the Chitin-binding type R&amp;R domain. O-linked (HexNAc) threonine glycosylation is present at Thr83.

As to expression, arthrodial membrane.

This is Cuticle protein AM1274 from Cancer pagurus (Rock crab).